A 174-amino-acid polypeptide reads, in one-letter code: Bifunctional protein PyrR 2 (174 aa).

Substrate contacts are provided by residues 39–40, 100–108, and Arg133; these read TR and DDVLFTGRT. The PRPP-binding motif lies at 96 to 108; the sequence is VILVDDVLFTGRT.

The protein belongs to the purine/pyrimidine phosphoribosyltransferase family. PyrR subfamily. Homodimer and homohexamer; in equilibrium.

It carries out the reaction UMP + diphosphate = 5-phospho-alpha-D-ribose 1-diphosphate + uracil. Regulates transcriptional attenuation of the pyrimidine nucleotide (pyr) operon by binding in a uridine-dependent manner to specific sites on pyr mRNA. This disrupts an antiterminator hairpin in the RNA and favors formation of a downstream transcription terminator, leading to a reduced expression of downstream genes. Functionally, also displays a weak uracil phosphoribosyltransferase activity which is not physiologically significant. The chain is Bifunctional protein PyrR 2 (pyrR2) from Lactiplantibacillus plantarum (strain ATCC BAA-793 / NCIMB 8826 / WCFS1) (Lactobacillus plantarum).